The following is a 509-amino-acid chain: 5-OH-xanthotoxin synthase (509 aa).

The chain crosses the membrane as a helical span at residues 5–25 (AVVILLILAFPIASVYVLFYH). The segment at 368–373 (TGALLI) is substrate specificity. Cysteine 449 lines the heme pocket.

This sequence belongs to the cytochrome P450 family. It depends on heme as a cofactor.

It is found in the microsome membrane. The enzyme catalyses xanthotoxin + reduced [NADPH--hemoprotein reductase] + O2 = 5-hydroxyxanthotoxin + oxidized [NADPH--hemoprotein reductase] + H2O + 2 H(+). The protein operates within secondary metabolite biosynthesis. Involved in the biosynthesis of coumarins and furanocoumarins (FCs), natural products required for defense responses against attacks by predators with potential medical and agroindustrial usages such as anticoagulant, rodenticide and artificial vanilla substitutes. Catalyzes the conversion of xanthotoxin into 5-hydroxyxanthotoxin. This chain is 5-OH-xanthotoxin synthase, found in Ammi majus (Bishop's weed).